We begin with the raw amino-acid sequence, 319 residues long: Mas-related G-protein coupled receptor member D (319 aa).

Topologically, residues 1–30 (MNYTPYSSPAPGLTISPTMDPVTWVYFSVT) are extracellular. Residues 31 to 51 (FLAMATCVCGIVGNSMVIWLL) form a helical membrane-spanning segment. Residues 52–64 (SFHRVQRSPFCTY) lie on the Cytoplasmic side of the membrane. The helical transmembrane segment at 65-85 (VLNLAVADLLFLLCMASLLSL) threads the bilayer. At 86–92 (ETGPLLT) the chain is on the extracellular side. The chain crosses the membrane as a helical span at residues 93–113 (ASTSARVYEGMKRIKYFAYTA). Residues 114–144 (GLSLLTAISTQRCLSVLFPIWYKCHRPQHLS) are Cytoplasmic-facing. A helical transmembrane segment spans residues 145 to 165 (GVVCGVLWALALLMNFLASFF). Residues 166 to 184 (CVQFWHPDKYQCFKVDMVF) lie on the Extracellular side of the membrane. The chain crosses the membrane as a helical span at residues 185–205 (NSLILGIFMPVMVLTSAIIFI). Topologically, residues 206–220 (RMRKNSLLQRRQPRR) are cytoplasmic. The helical transmembrane segment at 221–241 (LYVVILTSVLVFLTCSLPLGI) threads the bilayer. The Extracellular portion of the chain corresponds to 242-260 (NWFLLYWVELPQAVRLLYV). Residues 261-281 (CSSRFSSSLSSSANPVIYFLV) traverse the membrane as a helical segment. Residues 282 to 319 (GSQKSHRLQESLGAVLGRALQDEPEGRETPSTCTNDGV) are Cytoplasmic-facing.

It belongs to the G-protein coupled receptor 1 family. Mas subfamily. Co-expressed in the small diameter neurons with P2X3 and VR1 in dorsal root ganglia.

It localises to the cell membrane. Its function is as follows. May regulate nociceptor function and/or development, including the sensation or modulation of pain. Functions as a specific membrane receptor for beta-alanine. The receptor couples with G-protein G(q) and G(i). The polypeptide is Mas-related G-protein coupled receptor member D (Mrgprd) (Rattus norvegicus (Rat)).